Here is a 613-residue protein sequence, read N- to C-terminus: Xaa-Pro aminopeptidase ApepP (613 aa).

Substrate is bound by residues Arg77 and His388. Mn(2+) is bound by residues Asp408, Asp419, and His482. 3 residues coordinate substrate: His482, His491, and Glu517. Mn(2+)-binding residues include Glu517 and Glu531.

This sequence belongs to the peptidase M24B family. It depends on Mn(2+) as a cofactor. In terms of tissue distribution, detected in gut, brain, testes and ovary.

Its subcellular location is the cytoplasm. The enzyme catalyses Release of any N-terminal amino acid, including proline, that is linked to proline, even from a dipeptide or tripeptide.. Its activity is regulated as follows. Inhibited by the chelating agent EDTA. Divalent metal ions have substrate- and concentration-dependent effects on activity. Activity towards bradykinin is inhibited with increasing Mn(2+) concentration. Activity towards substance P is stimulated by low Mn(2+) concentrations (in the range 10 uM-1 mM) but inhibited by Mn(2+) concentrations in excess of 1 mM. Ca(2+), Mg(2+) and Co(2+) stimulate activity towards substance P at concentrations of 10-100 uM but are inhibitory at concentrations of 1 mM. Zn(2+), Ni(2+) and Cu(2+) strongly inhibit activity towards substance P at concentrations of 1 mM. In terms of biological role, catalyzes the removal of a penultimate prolyl residue from the N-termini of peptides, such as Arg-Pro-Pro. The sequence is that of Xaa-Pro aminopeptidase ApepP from Drosophila melanogaster (Fruit fly).